The following is a 212-amino-acid chain: PQMMGIPLILIAIILPMLLMFTSSTRLSSNRMTTMQLWVMNTITKQLFLPVNMPGHKWAAMLITLMIFLLSMNMLGLLPYTFTPTTQLSMNMALAAPLWLATVLTGLRNQPTASLGHLLPEGTPTPLIPLLIIIETVSLFIRPLALGVRLTANLTAGHLLIQLISTAAFVLMPTMPMAALSTLIVLMLLTGLEIAVAMIQAYVFTLLLTLYL.

The next 6 membrane-spanning stretches (helical) occupy residues 3-23 (MMGI…MFTS), 58-78 (WAAM…LGLL), 87-107 (QLSM…LTGL), 128-148 (IPLL…ALGV), 154-174 (LTAG…LMPT), and 179-199 (ALST…VAMI).

It belongs to the ATPase A chain family. Component of the ATP synthase complex composed at least of ATP5F1A/subunit alpha, ATP5F1B/subunit beta, ATP5MC1/subunit c (homooctomer), MT-ATP6/subunit a, MT-ATP8/subunit 8, ATP5ME/subunit e, ATP5MF/subunit f, ATP5MG/subunit g, ATP5MK/subunit k, ATP5MJ/subunit j, ATP5F1C/subunit gamma, ATP5F1D/subunit delta, ATP5F1E/subunit epsilon, ATP5PF/subunit F6, ATP5PB/subunit b, ATP5PD/subunit d, ATP5PO/subunit OSCP. ATP synthase complex consists of a soluble F(1) head domain (subunits alpha(3) and beta(3)) - the catalytic core - and a membrane F(0) domain - the membrane proton channel (subunits c, a, 8, e, f, g, k and j). These two domains are linked by a central stalk (subunits gamma, delta, and epsilon) rotating inside the F1 region and a stationary peripheral stalk (subunits F6, b, d, and OSCP). Interacts with DNAJC30; interaction is direct.

It is found in the mitochondrion inner membrane. The enzyme catalyses H(+)(in) = H(+)(out). In terms of biological role, subunit a, of the mitochondrial membrane ATP synthase complex (F(1)F(0) ATP synthase or Complex V) that produces ATP from ADP in the presence of a proton gradient across the membrane which is generated by electron transport complexes of the respiratory chain. ATP synthase complex consist of a soluble F(1) head domain - the catalytic core - and a membrane F(1) domain - the membrane proton channel. These two domains are linked by a central stalk rotating inside the F(1) region and a stationary peripheral stalk. During catalysis, ATP synthesis in the catalytic domain of F(1) is coupled via a rotary mechanism of the central stalk subunits to proton translocation. With the subunit c (ATP5MC1), forms the proton-conducting channel in the F(0) domain, that contains two crucial half-channels (inlet and outlet) that facilitate proton movement from the mitochondrial intermembrane space (IMS) into the matrix. Protons are taken up via the inlet half-channel and released through the outlet half-channel, following a Grotthuss mechanism. The protein is ATP synthase F(0) complex subunit a of Tropidurus montanus (Lizard).